A 171-amino-acid polypeptide reads, in one-letter code: Transcription antitermination protein NusB (171 aa).

It belongs to the NusB family.

Involved in transcription antitermination. Required for transcription of ribosomal RNA (rRNA) genes. Binds specifically to the boxA antiterminator sequence of the ribosomal RNA (rrn) operons. The protein is Transcription antitermination protein NusB of Pelodictyon phaeoclathratiforme (strain DSM 5477 / BU-1).